Reading from the N-terminus, the 311-residue chain is 2-methoxy-6-polyprenyl-1,4-benzoquinol methylase, mitochondrial (311 aa).

The N-terminal 29 residues, 1-29, are a transit peptide targeting the mitochondrion; that stretch reads MAAGLCPGRALLSRRGGALWALLGTARGR. S-adenosyl-L-methionine-binding positions include threonine 100, aspartate 155, and 183 to 184; that span reads NA.

This sequence belongs to the class I-like SAM-binding methyltransferase superfamily. MenG/UbiE family. In terms of assembly, component of a multi-subunit COQ enzyme complex, composed of at least COQ3, COQ4, COQ5, COQ6, COQ7 and COQ9.

The protein localises to the mitochondrion inner membrane. It carries out the reaction a 2-methoxy-6-(all-trans-polyprenyl)benzene-1,4-diol + S-adenosyl-L-methionine = a 5-methoxy-2-methyl-3-(all-trans-polyprenyl)benzene-1,4-diol + S-adenosyl-L-homocysteine + H(+). The protein operates within cofactor biosynthesis; ubiquinone biosynthesis. Its function is as follows. Methyltransferase required for the conversion of 2-polyprenyl-6-methoxy-1,4-benzoquinol (DDMQH2) to 2-polyprenyl-3-methyl-6-methoxy-1,4-benzoquinol (DMQH2). This Gallus gallus (Chicken) protein is 2-methoxy-6-polyprenyl-1,4-benzoquinol methylase, mitochondrial.